A 421-amino-acid chain; its full sequence is 4'-demethylrebeccamycin synthase (421 aa).

The protein belongs to the glycosyltransferase 28 family.

It carries out the reaction 4'-demethylrebeccamycin + H2O = dichloroarcyriaflavin A + beta-D-glucose. Its pathway is alkaloid biosynthesis. Functionally, catalyzes the penultimate step in the biosynthesis of rebeccamycin, an indolocarbazole alkaloid that inhibits topoisomerase 1. Has a wide substrate range, including staurosporine aglycone, EJG-III-108A, J-104303, 6-N-methyl-arcyriaflavin and indolo-[2,3-a]-carbazole. This Lentzea aerocolonigenes (Lechevalieria aerocolonigenes) protein is 4'-demethylrebeccamycin synthase (rebG).